A 781-amino-acid polypeptide reads, in one-letter code: Mitochondrial inner membrane m-AAA protease component paraplegin (781 aa).

The N-terminal 43 residues, 1 to 43 (MAAALLLLRALRQSPEPGPWRLWAQLSGRSPGLFSGAGGRRPY), are a transit peptide targeting the mitochondrion. Positions 44 to 105 (VVRGTPIGLA…GSTLYFNTSG (62 aa)) are cleaved as a propeptide — removed in mature form. The interval 105-134 (GLKQKNKDDDKPKGKAPEDDEEERRRKERE) is disordered. Over 106 to 144 (LKQKNKDDDKPKGKAPEDDEEERRRKEREDQMYRERLRT) the chain is Mitochondrial matrix. The segment covering 109 to 134 (KNKDDDKPKGKAPEDDEEERRRKERE) has biased composition (basic and acidic residues). A helical membrane pass occupies residues 145–165 (LFIIAIVMSLLNSLSTSGGSI). Over 166 to 248 (SWADFVNEML…DRIPVSYKRT (83 aa)) the chain is Mitochondrial intermembrane. A helical transmembrane segment spans residues 249 to 269 (GFFGNALYALGMTAVGLAILW). Topologically, residues 270–781 (YVFRLAGMTG…ASGEEEAPAP (512 aa)) are mitochondrial matrix. ATP is bound by residues Ala-312, Gly-352, Cys-353, Gly-354, Lys-355, Thr-356, and Leu-357. Tyr-505 is subject to 3'-nitrotyrosine. Zn(2+) is bound at residue His-574. Glu-575 is an active-site residue. Zn(2+) contacts are provided by His-578 and Asp-650. An interaction with PPIF region spans residues 701–781 (HEARLLVARA…ASGEEEAPAP (81 aa)).

The protein in the N-terminal section; belongs to the AAA ATPase family. In the C-terminal section; belongs to the peptidase M41 family. As to quaternary structure, forms heterooligomers with AFG3L2; the m-AAA protease is composed of heterohexamers of AFG3L2 and SPG7. Component of the mitochondrial permeability transition pore complex (mPTPC), at least composed of SPG7, VDAC1 and PPIF. Interacts with MAIP1. The cofactor is Zn(2+). Post-translationally, upon import into the mitochondrion, the N-terminal transit peptide is cleaved by the mitochondrial-processing peptidase (MPP) to generate an intermediate form which undergoes a second proteolytic cleavage mediated by proteases AFG3L2 removing an additional N-terminal fragment to generate the proteolytically active mature form.

It localises to the mitochondrion inner membrane. It catalyses the reaction ATP + H2O = ADP + phosphate + H(+). Functionally, catalytic component of the m-AAA protease, a protease that plays a key role in proteostasis of inner mitochondrial membrane proteins, and which is essential for axonal and neuron development. SPG7 possesses both ATPase and protease activities: the ATPase activity is required to unfold substrates, threading them into the internal proteolytic cavity for hydrolysis into small peptide fragments. The m-AAA protease exerts a dual role in the mitochondrial inner membrane: it mediates the processing of specific regulatory proteins and ensures protein quality control by degrading misfolded polypeptides. Mediates protein maturation of the mitochondrial ribosomal subunit MRPL32/bL32m by catalyzing the cleavage of the presequence of MRPL32/bL32m prior to assembly into the mitochondrial ribosome. Acts as a regulator of calcium in neurons by mediating degradation of SMDT1/EMRE before its assembly with the uniporter complex, limiting the availability of SMDT1/EMRE for MCU assembly and promoting efficient assembly of gatekeeper subunits with MCU. Also regulates mitochondrial calcium by catalyzing degradation of MCU. Plays a role in the formation and regulation of the mitochondrial permeability transition pore (mPTP) and its proteolytic activity is dispensable for this function. The sequence is that of Mitochondrial inner membrane m-AAA protease component paraplegin (Spg7) from Rattus norvegicus (Rat).